The primary structure comprises 79 residues: Small ribosomal subunit protein bS16 (79 aa).

Belongs to the bacterial ribosomal protein bS16 family.

The protein is Small ribosomal subunit protein bS16 of Oleidesulfovibrio alaskensis (strain ATCC BAA-1058 / DSM 17464 / G20) (Desulfovibrio alaskensis).